The primary structure comprises 283 residues: Pantothenate synthetase (283 aa).

30–37 (MGNLHDAH) lines the ATP pocket. The Proton donor role is filled by His-37. Gln-61 serves as a coordination point for (R)-pantoate. Residue Gln-61 participates in beta-alanine binding. 149-152 (GVKD) is a binding site for ATP. Gln-155 is a (R)-pantoate binding site. ATP is bound by residues Val-178 and 186 to 189 (MSSR).

The protein belongs to the pantothenate synthetase family. As to quaternary structure, homodimer.

It is found in the cytoplasm. It catalyses the reaction (R)-pantoate + beta-alanine + ATP = (R)-pantothenate + AMP + diphosphate + H(+). Its pathway is cofactor biosynthesis; (R)-pantothenate biosynthesis; (R)-pantothenate from (R)-pantoate and beta-alanine: step 1/1. Its function is as follows. Catalyzes the condensation of pantoate with beta-alanine in an ATP-dependent reaction via a pantoyl-adenylate intermediate. The protein is Pantothenate synthetase of Cellvibrio japonicus (strain Ueda107) (Pseudomonas fluorescens subsp. cellulosa).